Here is a 437-residue protein sequence, read N- to C-terminus: Protein translocase subunit SecY (437 aa).

10 helical membrane passes run 19–39 (LFTL…IPGV), 69–89 (LLQI…SIIL), 122–142 (VALA…GALF), 157–177 (IFTT…VMWL), 189–209 (GMSI…LWAI), 219–239 (WIEF…VVFV), 275–295 (GVIP…IVQF), 318–338 (HIIL…AISF), 378–398 (GSLY…GFGA), and 400–420 (QNFP…LETV).

It belongs to the SecY/SEC61-alpha family. Component of the Sec protein translocase complex. Heterotrimer consisting of SecY, SecE and SecG subunits. The heterotrimers can form oligomers, although 1 heterotrimer is thought to be able to translocate proteins. Interacts with the ribosome. Interacts with SecDF, and other proteins may be involved. Interacts with SecA.

Its subcellular location is the cell membrane. Functionally, the central subunit of the protein translocation channel SecYEG. Consists of two halves formed by TMs 1-5 and 6-10. These two domains form a lateral gate at the front which open onto the bilayer between TMs 2 and 7, and are clamped together by SecE at the back. The channel is closed by both a pore ring composed of hydrophobic SecY resides and a short helix (helix 2A) on the extracellular side of the membrane which forms a plug. The plug probably moves laterally to allow the channel to open. The ring and the pore may move independently. This is Protein translocase subunit SecY from Streptomyces coelicolor (strain ATCC BAA-471 / A3(2) / M145).